The sequence spans 186 residues: Acireductone dioxygenase (186 aa).

The disordered stretch occupies residues 1–21 (MSRLSIFPDGSTSMDQSSPTP). Positions 10 to 20 (GSTSMDQSSPT) are enriched in polar residues. Fe(2+) is bound by residues H103, H105, E109, and H147. Ni(2+) contacts are provided by H103, H105, E109, and H147.

It belongs to the acireductone dioxygenase (ARD) family. In terms of assembly, monomer. It depends on Fe(2+) as a cofactor. Ni(2+) serves as cofactor.

The catalysed reaction is 1,2-dihydroxy-5-(methylsulfanyl)pent-1-en-3-one + O2 = 3-(methylsulfanyl)propanoate + CO + formate + 2 H(+). The enzyme catalyses 1,2-dihydroxy-5-(methylsulfanyl)pent-1-en-3-one + O2 = 4-methylsulfanyl-2-oxobutanoate + formate + 2 H(+). It participates in amino-acid biosynthesis; L-methionine biosynthesis via salvage pathway; L-methionine from S-methyl-5-thio-alpha-D-ribose 1-phosphate: step 5/6. Catalyzes 2 different reactions between oxygen and the acireductone 1,2-dihydroxy-3-keto-5-methylthiopentene (DHK-MTPene) depending upon the metal bound in the active site. Fe-containing acireductone dioxygenase (Fe-ARD) produces formate and 2-keto-4-methylthiobutyrate (KMTB), the alpha-ketoacid precursor of methionine in the methionine recycle pathway. Ni-containing acireductone dioxygenase (Ni-ARD) produces methylthiopropionate, carbon monoxide and formate, and does not lie on the methionine recycle pathway. In Synechococcus sp. (strain CC9902), this protein is Acireductone dioxygenase.